The primary structure comprises 567 residues: Eukaryotic translation initiation factor 3 subunit D (567 aa).

Disordered regions lie at residues 12 to 34 (PVKS…YAPF) and 122 to 160 (GQNV…RGRR). Gly residues predominate over residues 128–142 (GGRGGRYGSSGGRGA). The segment at 300–314 (PFDYLTVNENAYDSP) is RNA gate.

It belongs to the eIF-3 subunit D family. In terms of assembly, component of the eukaryotic translation initiation factor 3 (eIF-3) complex. The eIF-3 complex appears to include tif32/eif3a, SPAC25G10.08/eif3b, tif33/eif3c, SPBC4C3.07/eif3f, tif35/eif3g and sum1/eif3i. This set of common subunits may also associate exclusively with either moe1/eif3d and int6/eif3e, or with SPAC821.05/eif3h and SPAC1751.03/eif3m. The eIF-3 complex may also include SPAC3A12.13c/eif3j.

Its subcellular location is the cytoplasm. Functionally, mRNA cap-binding component of the eukaryotic translation initiation factor 3 (eIF-3) complex, which is involved in protein synthesis of a specialized repertoire of mRNAs and, together with other initiation factors, stimulates binding of mRNA and methionyl-tRNAi to the 40S ribosome. The eIF-3 complex specifically targets and initiates translation of a subset of mRNAs involved in cell proliferation. In the eIF-3 complex, eif3d specifically recognizes and binds the 7-methylguanosine cap of a subset of mRNAs. The protein is Eukaryotic translation initiation factor 3 subunit D (moe1) of Schizosaccharomyces pombe (strain 972 / ATCC 24843) (Fission yeast).